We begin with the raw amino-acid sequence, 591 residues long: Probable LRR receptor-like serine/threonine-protein kinase At1g69990 (591 aa).

The N-terminal stretch at 1-18 is a signal peptide; it reads MKTISIFFVIILMSSSHA. Residues 19–218 are Extracellular-facing; the sequence is EDDVLCLKGF…GKNLTIIVTA (200 aa). N-linked (GlcNAc...) asparagine glycosylation occurs at Asn46. 5 LRR repeats span residues 66 to 88, 90 to 111, 115 to 137, 139 to 162, and 163 to 185; these read RILSLQLQSMQLSGQIPESLKLC, SLQSLDLSFNDFSGLIPSQICS, YLVTLDLSGNKLSGSIPSQIVDC, FLNSLALNQNKLTGSIPSELTRLN, and RLQRLSLADNDLSGSIPSELSHY. The N-linked (GlcNAc...) asparagine glycan is linked to Asn211. A helical membrane pass occupies residues 219-239; sequence GVIGAVGSLCVGFGMFWWFFI. Residues 240-591 lie on the Cytoplasmic side of the membrane; that stretch reads RDRRKMNNYG…LIFNKQEHLK (352 aa). At Thr292 the chain carries Phosphothreonine. Residues 295–573 form the Protein kinase domain; that stretch reads FDSGNIVVSS…KNLGDQHGFF (279 aa). Residues 301–309 and Lys323 each bind ATP; that span reads VVSSRSGVS. Residue Ser378 is modified to Phosphoserine. Thr389 is subject to Phosphothreonine. Tyr463 bears the Phosphotyrosine mark. Ser465 bears the Phosphoserine mark. Thr466 carries the phosphothreonine modification. A Phosphoserine modification is found at Ser470.

This sequence belongs to the protein kinase superfamily. Ser/Thr protein kinase family.

It is found in the membrane. It catalyses the reaction L-seryl-[protein] + ATP = O-phospho-L-seryl-[protein] + ADP + H(+). It carries out the reaction L-threonyl-[protein] + ATP = O-phospho-L-threonyl-[protein] + ADP + H(+). The polypeptide is Probable LRR receptor-like serine/threonine-protein kinase At1g69990 (Arabidopsis thaliana (Mouse-ear cress)).